Here is a 624-residue protein sequence, read N- to C-terminus: Kelch-like protein diablo (624 aa).

The disordered stretch occupies residues Met1–His55. Positions Gly15–Gly28 are enriched in low complexity. The span at Ser29–Gly38 shows a compositional bias: gly residues. A BTB domain is found at Cys73 to Glu140. Residues Cys175 to Gly277 form the BACK domain. Kelch repeat units lie at residues Val324–Asp370, Leu372–Gly418, Phe419–Gly465, Leu467–Asn512, Ile514–Gly559, and Gln560–Ala606.

Its pathway is protein modification; protein ubiquitination. Functionally, probable substrate-specific adapter of an E3 ubiquitin-protein ligase complex which mediates the ubiquitination and subsequent proteasomal degradation of target proteins. May have a role in synapse differentiation and growth. The protein is Kelch-like protein diablo of Drosophila grimshawi (Hawaiian fruit fly).